Here is a 143-residue protein sequence, read N- to C-terminus: Large ribosomal subunit protein uL11 (143 aa).

It belongs to the universal ribosomal protein uL11 family. Part of the ribosomal stalk of the 50S ribosomal subunit. Interacts with L10 and the large rRNA to form the base of the stalk. L10 forms an elongated spine to which L12 dimers bind in a sequential fashion forming a multimeric L10(L12)X complex. Post-translationally, one or more lysine residues are methylated.

Functionally, forms part of the ribosomal stalk which helps the ribosome interact with GTP-bound translation factors. This is Large ribosomal subunit protein uL11 from Cellvibrio japonicus (strain Ueda107) (Pseudomonas fluorescens subsp. cellulosa).